Consider the following 246-residue polypeptide: 23S rRNA (guanosine-2'-O-)-methyltransferase RlmB (246 aa).

Residues G196, I216, and L225 each contribute to the S-adenosyl-L-methionine site.

The protein belongs to the class IV-like SAM-binding methyltransferase superfamily. RNA methyltransferase TrmH family. RlmB subfamily. In terms of assembly, homodimer.

The protein resides in the cytoplasm. It carries out the reaction guanosine(2251) in 23S rRNA + S-adenosyl-L-methionine = 2'-O-methylguanosine(2251) in 23S rRNA + S-adenosyl-L-homocysteine + H(+). Its function is as follows. Specifically methylates the ribose of guanosine 2251 in 23S rRNA. The chain is 23S rRNA (guanosine-2'-O-)-methyltransferase RlmB from Yersinia pestis.